The chain runs to 597 residues: Aspartate--tRNA(Asp/Asn) ligase (597 aa).

Residue glutamate 182 participates in L-aspartate binding. The segment at glutamine 206 to lysine 209 is aspartate. Arginine 228 provides a ligand contact to L-aspartate. Residues arginine 228–glutamate 230 and glutamine 237 each bind ATP. Histidine 456 lines the L-aspartate pocket. Glutamate 490 contacts ATP. An L-aspartate-binding site is contributed by arginine 497. Glycine 542–arginine 545 is an ATP binding site.

This sequence belongs to the class-II aminoacyl-tRNA synthetase family. Type 1 subfamily. Homodimer.

The protein resides in the cytoplasm. The catalysed reaction is tRNA(Asx) + L-aspartate + ATP = L-aspartyl-tRNA(Asx) + AMP + diphosphate. Aspartyl-tRNA synthetase with relaxed tRNA specificity since it is able to aspartylate not only its cognate tRNA(Asp) but also tRNA(Asn). Reaction proceeds in two steps: L-aspartate is first activated by ATP to form Asp-AMP and then transferred to the acceptor end of tRNA(Asp/Asn). The sequence is that of Aspartate--tRNA(Asp/Asn) ligase from Desulfatibacillum aliphaticivorans.